The sequence spans 440 residues: Replication factor C large subunit (440 aa).

Residue 48–55 (GPPGVGKT) coordinates ATP.

It belongs to the activator 1 small subunits family. RfcL subfamily. As to quaternary structure, heteromultimer composed of small subunits (RfcS) and large subunits (RfcL).

In terms of biological role, part of the RFC clamp loader complex which loads the PCNA sliding clamp onto DNA. The chain is Replication factor C large subunit from Sulfurisphaera tokodaii (strain DSM 16993 / JCM 10545 / NBRC 100140 / 7) (Sulfolobus tokodaii).